Consider the following 169-residue polypeptide: MAKHKIDYTRENGLPVVLTTIDKLVNWGRSNSLWAMNYGLACCAIEMMATGASRYDFDRFGTIFRASAKQSEVMVIAGTLSKKHAELARRLYDAMPEPKWVISMGSCANTGGMFNTYAVVQGCDRIIPVDIYLPGCAPRPETLQYALMILQKKIRREKANRNQLPKRLV.

The [4Fe-4S] cluster site is built by cysteine 42, cysteine 43, cysteine 107, and cysteine 136.

Belongs to the complex I 20 kDa subunit family. NDH-1 is composed of 14 different subunits. Subunits NuoB, C, D, E, F, and G constitute the peripheral sector of the complex. It depends on [4Fe-4S] cluster as a cofactor.

It localises to the cell inner membrane. It carries out the reaction a quinone + NADH + 5 H(+)(in) = a quinol + NAD(+) + 4 H(+)(out). In terms of biological role, NDH-1 shuttles electrons from NADH, via FMN and iron-sulfur (Fe-S) centers, to quinones in the respiratory chain. Couples the redox reaction to proton translocation (for every two electrons transferred, four hydrogen ions are translocated across the cytoplasmic membrane), and thus conserves the redox energy in a proton gradient. The protein is NADH-quinone oxidoreductase subunit B of Campylobacter hominis (strain ATCC BAA-381 / DSM 21671 / CCUG 45161 / LMG 19568 / NCTC 13146 / CH001A).